Reading from the N-terminus, the 198-residue chain is MAEKQTAKRNRREEILQSLALMLESSDGSQRITTAKLAASVGVSEAALYRHFPSKTRMFDSLIEFIEDSLITRINLILKDEKNTSTRLRLIVLLILGFGERNPGLTRILTGHALMFEQDRLQGRINQLFERIEAQLRQVLREKRMREGEGYTTDENLLASQLLAFCEGMLSRFVRSEFKYRPTDDFDARWPLIAAQLQ.

An HTH tetR-type domain is found at 10-70 (NRREEILQSL…SLIEFIEDSL (61 aa)). The H-T-H motif DNA-binding region spans 33-52 (TTAKLAASVGVSEAALYRHF). The stretch at 117–144 (EQDRLQGRINQLFERIEAQLRQVLREKR) forms a coiled coil.

Belongs to the nucleoid occlusion factor SlmA family. As to quaternary structure, homodimer. Interacts with FtsZ.

The protein localises to the cytoplasm. It is found in the nucleoid. In terms of biological role, required for nucleoid occlusion (NO) phenomenon, which prevents Z-ring formation and cell division over the nucleoid. Acts as a DNA-associated cell division inhibitor that binds simultaneously chromosomal DNA and FtsZ, and disrupts the assembly of FtsZ polymers. SlmA-DNA-binding sequences (SBS) are dispersed on non-Ter regions of the chromosome, preventing FtsZ polymerization at these regions. This chain is Nucleoid occlusion factor SlmA, found in Salmonella agona (strain SL483).